A 279-amino-acid polypeptide reads, in one-letter code: NADPH-dependent 7-cyano-7-deazaguanine reductase (279 aa).

86–88 lines the substrate pocket; the sequence is IES. Position 88–89 (88–89) interacts with NADPH; sequence SK. Cys187 (thioimide intermediate) is an active-site residue. The Proton donor role is filled by Asp194. 226–227 provides a ligand contact to substrate; it reads HE. 255 to 256 is an NADPH binding site; the sequence is RG.

The protein belongs to the GTP cyclohydrolase I family. QueF type 2 subfamily. Homodimer.

The protein resides in the cytoplasm. It carries out the reaction 7-aminomethyl-7-carbaguanine + 2 NADP(+) = 7-cyano-7-deazaguanine + 2 NADPH + 3 H(+). It functions in the pathway tRNA modification; tRNA-queuosine biosynthesis. Functionally, catalyzes the NADPH-dependent reduction of 7-cyano-7-deazaguanine (preQ0) to 7-aminomethyl-7-deazaguanine (preQ1). This chain is NADPH-dependent 7-cyano-7-deazaguanine reductase, found in Pasteurella multocida (strain Pm70).